The following is a 55-amino-acid chain: Small ribosomal subunit protein uS14 (55 aa).

The tract at residues 1–20 (MSFEPSGPHSHRKPFGKGSR) is disordered. Residues Cys22, Cys25, Cys38, and Cys41 each contribute to the Zn(2+) site.

It belongs to the universal ribosomal protein uS14 family. Zn(2+) serves as cofactor.

The polypeptide is Small ribosomal subunit protein uS14 (RPS29) (Encephalitozoon cuniculi (strain GB-M1) (Microsporidian parasite)).